Reading from the N-terminus, the 441-residue chain is Putative transporter AmpG 1 (441 aa).

12 helical membrane passes run 5–25 (SHLL…MITG), 42–62 (IGIL…APIF), 78–98 (LSWI…FSFL), 104–124 (LVLF…QDTI), 143–163 (GIYI…AIYL), 171–191 (EIYK…IVAA), 249–269 (SGND…LVLY), 297–317 (VGKF…GFIM), 325–345 (SIFL…FLEI), 352–372 (LLFI…TAYI), 390–410 (FLSS…GYMV), and 413–433 (FGWQ…LLIL).

It belongs to the major facilitator superfamily.

It is found in the cell inner membrane. The protein is Putative transporter AmpG 1 (ampG1) of Rickettsia felis (strain ATCC VR-1525 / URRWXCal2) (Rickettsia azadi).